The sequence spans 269 residues: Glutamate racemase (269 aa).

Residues 14–15 and 46–47 contribute to the substrate site; these read DS and YS. The active-site Proton donor/acceptor is the Cys-78. Position 79–80 (79–80) interacts with substrate; sequence NT. The active-site Proton donor/acceptor is the Cys-189. 190–191 lines the substrate pocket; sequence TH.

Belongs to the aspartate/glutamate racemases family.

The enzyme catalyses L-glutamate = D-glutamate. The protein operates within cell wall biogenesis; peptidoglycan biosynthesis. Its function is as follows. Provides the (R)-glutamate required for cell wall biosynthesis. In Haemophilus influenzae (strain ATCC 51907 / DSM 11121 / KW20 / Rd), this protein is Glutamate racemase.